The sequence spans 317 residues: Inositol oxygenase 2 (317 aa).

Substrate-binding positions include R57 and 115-117 (DES). Fe cation is bound by residues H128, H153, and D154. Substrate is bound by residues K157 and 174–175 (GD). Fe cation contacts are provided by H226, H252, and D285. Substrate is bound at residue 252-253 (HS).

The protein belongs to the myo-inositol oxygenase family. It depends on Fe cation as a cofactor. In terms of tissue distribution, expressed mainly in roots, stems, flowers and siliques. Low expression in leaves.

Its subcellular location is the cytoplasm. It carries out the reaction myo-inositol + O2 = D-glucuronate + H2O + H(+). It participates in polyol metabolism; myo-inositol degradation into D-glucuronate; D-glucuronate from myo-inositol: step 1/1. Involved in the biosynthesis of UDP-glucuronic acid (UDP-GlcA), providing nucleotide sugars for cell-wall polymers. May be also involved in plant ascorbate biosynthesis. The sequence is that of Inositol oxygenase 2 (MIOX2) from Arabidopsis thaliana (Mouse-ear cress).